Consider the following 306-residue polypeptide: Mitochondrial basic amino acids transporter (306 aa).

6 helical membrane-spanning segments follow: residues 2-22 (ALDFLAGCAGGVAGVIVGHPF), 61-81 (GLGSPLMGLTFINALVFGVQG), 96-116 (FLAGAAAGAIQCVICCPMELA), 153-172 (GMVSTLLRETPSFGVYFLTY), 187-207 (LLVPKLLLAGGTSGITSWLST), and 255-275 (LLRAFPVNAATFATVTVVLTY). Solcar repeat units lie at residues 2–86 (ALDF…TLRA), 90–178 (DSPL…MTRA), and 190–275 (PKLL…VLTY). Positions 284–306 (DSEAALGTSPTPAGSALAQPSSL) are disordered. Residues 291-306 (TSPTPAGSALAQPSSL) are compositionally biased toward polar residues.

The protein belongs to the mitochondrial carrier (TC 2.A.29) family. As to expression, widely expressed, with highest levels in the brain, including cortex, cerebellum, hippocampus and hypothalamus, and moderate levels in liver, kidney, heart and testis.

It localises to the mitochondrion inner membrane. It carries out the reaction L-lysine(out) + L-arginine(in) = L-lysine(in) + L-arginine(out). The enzyme catalyses L-histidine(out) + L-arginine(in) = L-histidine(in) + L-arginine(out). It catalyses the reaction L-ornithine(in) + L-arginine(out) = L-ornithine(out) + L-arginine(in). The catalysed reaction is L-homoarginine(in) + L-arginine(out) = L-homoarginine(out) + L-arginine(in). It carries out the reaction N(omega)-methyl-L-arginine(in) + L-arginine(out) = N(omega)-methyl-L-arginine(out) + L-arginine(in). The enzyme catalyses L-arginine(in) = L-arginine(out). It catalyses the reaction L-lysine(in) = L-lysine(out). The catalysed reaction is L-ornithine(in) = L-ornithine(out). It carries out the reaction L-histidine(out) = L-histidine(in). In terms of biological role, mitochondrial transporter of arginine, lysine, homoarginine, methylarginine. Transports with a much lesser extent, ornithine and histidine. Does not transport carnitine nor acylcarnitines. Functions by both counter-exchange and uniport mechanisms. Plays a physiological role in the import of basic amino acids into mitochondria for mitochondrial protein synthesis and amino acid degradation. This Mus musculus (Mouse) protein is Mitochondrial basic amino acids transporter (Slc25a29).